The primary structure comprises 181 residues: Large ribosomal subunit protein uL5 (181 aa).

The protein belongs to the universal ribosomal protein uL5 family. In terms of assembly, part of the 50S ribosomal subunit; part of the 5S rRNA/L5/L18/L25 subcomplex. Contacts the 5S rRNA and the P site tRNA. Forms a bridge to the 30S subunit in the 70S ribosome.

Its function is as follows. This is one of the proteins that bind and probably mediate the attachment of the 5S RNA into the large ribosomal subunit, where it forms part of the central protuberance. In the 70S ribosome it contacts protein S13 of the 30S subunit (bridge B1b), connecting the 2 subunits; this bridge is implicated in subunit movement. Contacts the P site tRNA; the 5S rRNA and some of its associated proteins might help stabilize positioning of ribosome-bound tRNAs. This chain is Large ribosomal subunit protein uL5, found in Nitrosococcus oceani (strain ATCC 19707 / BCRC 17464 / JCM 30415 / NCIMB 11848 / C-107).